The primary structure comprises 128 residues: Cytochrome c' (128 aa).

7 residues coordinate heme c: glutamine 13, glutamine 17, glutamate 69, threonine 70, cysteine 118, cysteine 121, and histidine 122.

As to quaternary structure, homodimer. Post-translationally, binds 1 heme c group covalently per subunit.

Its function is as follows. Cytochrome c' is the most widely occurring bacterial c-type cytochrome. Cytochromes c' are high-spin proteins and the heme has no sixth ligand. Their exact function is not known. This Magnetospirillum molischianum (Rhodospirillum molischianum) protein is Cytochrome c'.